We begin with the raw amino-acid sequence, 157 residues long: CAPA peptides (157 aa).

The signal sequence occupies residues 1–21 (MQPTMRIIVSMALLAYAVASA). Residues 22 to 28 (YHSNVKL) constitute a propeptide that is removed on maturation. Val42 carries the valine amide modification. Residues 45 to 66 (ASGNTWQLPLNDLYPEYEPAQV) constitute a propeptide that is removed on maturation. The residue at position 69 (Gln69) is a Pyrrolidone carboxylic acid; partial. Val76 is subject to Valine amide. A leucine amide mark is found at Leu85 and Leu117. The propeptide occupies 120-157 (AFKNDDDEITIQNESNDHSEPEQTELIHEDRRKRQTLN). Positions 131-157 (QNESNDHSEPEQTELIHEDRRKRQTLN) are disordered. Residues 134 to 151 (SNDHSEPEQTELIHEDRR) are compositionally biased toward basic and acidic residues.

It belongs to the pyrokinin family. In terms of tissue distribution, CAPA-periviscerokinin 1: Expressed in corpora cardiaca (CC), corpora allata (CA), antennal lobe (AL) and gnathal ganglion (GNG) (at protein level). Expression detected in most animals in CC and CA and in some animals in AL and GNG (at protein level). CAPA-periviscerokinin 2: Expressed in corpora cardiaca (CC), corpora allata (CA), antennal lobe (AL) and gnathal ganglion (GNG) (at protein level). For non-pyroglutamate form, expression in AL detected in all animals, in CC, CA and GNG in most animals (at protein level). For pyroglutamate form, expression in CC and CA detected in most animals, in AL and GNG in some animals (at protein level). CAPA-periviscerokinin 3: Expressed in corpora cardiaca (CC), corpora allata (CA), antennal lobe (AL) and gnathal ganglion (GNG). Expression detected in most animals in CC and CA and in some animals in AL and GNG (at protein level). CAPA-precursor-related peptide 3: Expressed in corpora cardiaca (CC), corpora allata (CA), antennal lobe (AL) and gnathal ganglion (GNG) (at protein level). Expression in CC and CA detected in some animals, expression in Al and GNG detected in few animals (at protein level). CAPA-trypto-pyrokinin: Expressed in corpora cardiaca (CC), corpora allata (CA), antennal lobe (AL) and gnathal ganglion (GNG) (at protein level). Expression in CC, CA and GNG detected in most animals, in AL in some animals (at protein level).

Its subcellular location is the secreted. In terms of biological role, myoactive. This chain is CAPA peptides, found in Agrotis ipsilon (Black cutworm moth).